We begin with the raw amino-acid sequence, 201 residues long: Charged multivesicular body protein 6 (201 aa).

G2 carries N-myristoyl glycine lipidation. Positions 10-145 form a coiled coil; sequence QSRVTEQDKA…YQRQIDELLA (136 aa). The residue at position 119 (S119) is a Phosphoserine. At T130 the chain carries Phosphothreonine. Residues 168–179 carry the Type-2 MIT-interacting motif motif; the sequence is IELPEVPSEPLP. The segment at 170–181 is interaction with VPS4A; it reads LPEVPSEPLPEK.

The protein belongs to the SNF7 family. Probable core component of the endosomal sorting required for transport complex III (ESCRT-III). ESCRT-III components are thought to multimerize to form a flat lattice on the perimeter membrane of the endosome. Several assembly forms of ESCRT-III may exist that interact and act sequentially. Interacts with VPS4A; the interaction is direct. Interacts with VPS4B; the interaction is direct. Interacts with CHMP4A, CHMP4B and CHMP4C. Interacts with SNF8, VPS25 and VPS36. In terms of processing, ISGylated in a CHMP5-dependent manner. Isgylation weakens its interaction with VPS4A. As to expression, ubiquitously expressed.

It is found in the endomembrane system. The protein localises to the endosome membrane. It localises to the late endosome membrane. The protein resides in the membrane. Its function is as follows. Probable core component of the endosomal sorting required for transport complex III (ESCRT-III) which is involved in multivesicular bodies (MVBs) formation and sorting of endosomal cargo proteins into MVBs. MVBs contain intraluminal vesicles (ILVs) that are generated by invagination and scission from the limiting membrane of the endosome and mostly are delivered to lysosomes enabling degradation of membrane proteins, such as stimulated growth factor receptors, lysosomal enzymes and lipids. The MVB pathway appears to require the sequential function of ESCRT-O, -I,-II and -III complexes. ESCRT-III proteins mostly dissociate from the invaginating membrane before the ILV is released. The ESCRT machinery also functions in topologically equivalent membrane fission events, such as the terminal stages of cytokinesis and the budding of enveloped viruses (HIV-1 and other lentiviruses). ESCRT-III proteins are believed to mediate the necessary vesicle extrusion and/or membrane fission activities, possibly in conjunction with the AAA ATPase VPS4. In the ESCRT-III complex, it probably serves as an acceptor for the ESCRT-II complex on endosomal membranes. This is Charged multivesicular body protein 6 (CHMP6) from Homo sapiens (Human).